A 144-amino-acid chain; its full sequence is MKLHELKPAEGSRQVRNRVGRGTSSGNGKTAGRGQKGQKARGKVRLGFEGGQMPLFRRMPKRGFKNINRKEYAIVNLETLNKFEDGAEVTPALLVESGIIKDEKDGIKVLGNGTLNKQLTVKASKFSASAKEAIESKGGKAEVI.

Basic and acidic residues predominate over residues Met1–Glu10. The interval Met1–Gln52 is disordered. The segment covering Thr23–Gln35 has biased composition (gly residues).

Belongs to the universal ribosomal protein uL15 family. Part of the 50S ribosomal subunit.

Functionally, binds to the 23S rRNA. This is Large ribosomal subunit protein uL15 from Ligilactobacillus salivarius (strain UCC118) (Lactobacillus salivarius).